The sequence spans 311 residues: Phospholipid phosphatase 3 (311 aa).

Residues 1–33 (MQNYKYDKAIVPESKNGGSPALNNNPRRSGSKR) lie on the Cytoplasmic side of the membrane. Position 19 is a phosphoserine (Ser19). A helical membrane pass occupies residues 34–54 (VLLICLDLFCLFMAGLPFLII). Residues 55 to 85 (ETSTIKPYHRGFYCNDESIKYPLKTGETIND) are Extracellular-facing. A helical membrane pass occupies residues 86–106 (AVLCAVGIVIAILAIITGEFY). At 107–122 (RIYYLKKSRSTIQNPY) the chain is on the cytoplasmic side. A Dityrosine basolateral targeting motif motif is present at residues 109-110 (YY). The helical transmembrane segment at 123 to 143 (VAALYKQVGCFLFGCAISQSF) threads the bilayer. Residues 144 to 193 (TDIAKVSIGRLRPHFLSVCNPDFSQINCSEGYIQNYRCRGDDSKVQEARK) lie on the Extracellular side of the membrane. A phosphatase sequence motif I region spans residues 148-156 (KVSIGRLRP). Asn170 is a glycosylation site (N-linked (GlcNAc...) asparagine). Positions 182–184 (RGD) match the Integrin-binding motif motif. The chain crosses the membrane as a helical span at residues 194-214 (SFFSGHASFSMYTMLYLVLYL). Positions 196-199 (FSGH) are phosphatase sequence motif II. The active-site Proton donors is the His199. The Cytoplasmic portion of the chain corresponds to 215-225 (QARFTWRGARL). Residues 226-243 (LRPLLQFTLIMMAFYTGL) form a helical membrane-spanning segment. Positions 244-255 (SRVSDHKHHPSD) are phosphatase sequence motif III. At 244–257 (SRVSDHKHHPSDVL) the chain is on the extracellular side. His251 acts as the Nucleophile in catalysis. A helical transmembrane segment spans residues 258-278 (AGFAQGALVACCIVFFVSDLF). The interval 275–311 (SDLFKTKTTLSLPAPAIRKEILSPVDIIDRNNHHNMM) is mediates interaction with CTNND1. Over 279-311 (KTKTTLSLPAPAIRKEILSPVDIIDRNNHHNMM) the chain is Cytoplasmic.

This sequence belongs to the PA-phosphatase related phosphoesterase family. In terms of assembly, forms functional homodimers and homooligomers that are not required for substrate recognition and catalytic activity. Can also form heterooligomers with other PLPP2 and PLPP3. Interacts with CTNND1; negatively regulates the PLPP3-mediated stabilization of beta-catenin/CTNNB1. Post-translationally, N-glycosylated. Contains high-mannose oligosaccharides. In terms of tissue distribution, ubiquitously expressed. Highly expressed in heart and placenta.

It is found in the cell membrane. It localises to the basolateral cell membrane. Its subcellular location is the endoplasmic reticulum membrane. The protein localises to the endoplasmic reticulum-Golgi intermediate compartment membrane. The protein resides in the golgi apparatus membrane. It is found in the golgi apparatus. It localises to the trans-Golgi network membrane. Its subcellular location is the membrane raft. It carries out the reaction a 1,2-diacyl-sn-glycero-3-phosphate + H2O = a 1,2-diacyl-sn-glycerol + phosphate. It catalyses the reaction 1,2-dihexadecanoyl-sn-glycero-3-phosphate + H2O = 1,2-dihexadecanoyl-sn-glycerol + phosphate. The catalysed reaction is 1,2-di-(9Z-octadecenoyl)-sn-glycero-3-phosphate + H2O = 1,2-di-(9Z-octadecenoyl)-sn-glycerol + phosphate. The enzyme catalyses a monoacyl-sn-glycero-3-phosphate + H2O = a monoacylglycerol + phosphate. It carries out the reaction (9Z)-octadecenoyl-sn-glycero-3-phosphate + H2O = (9Z-octadecenoyl)-glycerol + phosphate. It catalyses the reaction sphing-4-enine 1-phosphate + H2O = sphing-4-enine + phosphate. The catalysed reaction is an N-acylsphing-4-enine 1-phosphate + H2O = an N-acylsphing-4-enine + phosphate. The enzyme catalyses N-(octanoyl)-sphing-4-enine-1-phosphate + H2O = N-octanoylsphing-4-enine + phosphate. It carries out the reaction N-(9Z-octadecenoyl)-ethanolamine phosphate + H2O = N-(9Z-octadecenoyl) ethanolamine + phosphate. It functions in the pathway lipid metabolism; phospholipid metabolism. Magnesium-independent phospholipid phosphatase. Insensitive to N-ethylmaleimide. Inhibited by sphingosine, zinc ions and modestly by propanolol. Its function is as follows. Magnesium-independent phospholipid phosphatase of the plasma membrane that catalyzes the dephosphorylation of a variety of glycerolipid and sphingolipid phosphate esters including phosphatidate/PA, lysophosphatidate/LPA, diacylglycerol pyrophosphate/DGPP, sphingosine 1-phosphate/S1P and ceramide 1-phosphate/C1P. Also acts on N-oleoyl ethanolamine phosphate/N-(9Z-octadecenoyl)-ethanolamine phosphate, a potential physiological compound. Has both an extracellular and an intracellular phosphatase activity, allowing the hydrolysis and the cellular uptake of these bioactive lipid mediators from the milieu, regulating signal transduction in different cellular processes. Through the dephosphorylation of extracellular sphingosine-1-phosphate and the regulation of its extra- and intracellular availability, plays a role in vascular homeostasis, regulating endothelial cell migration, adhesion, survival, proliferation and the production of pro-inflammatory cytokines. By maintaining the appropriate levels of this lipid in the cerebellum, also ensure its proper development and function. Through its intracellular lipid phosphatase activity may act in early compartments of the secretory pathway, regulating the formation of Golgi to endoplasmic reticulum retrograde transport carriers. Functionally, independently of this phosphatase activity may also function in the Wnt signaling pathway and the stabilization of beta-catenin/CTNNB1, thereby regulating cell proliferation, migration and differentiation in angiogenesis or yet in tumor growth. Also plays a role in integrin-mediated cell-cell adhesion in angiogenesis. This chain is Phospholipid phosphatase 3, found in Homo sapiens (Human).